A 333-amino-acid polypeptide reads, in one-letter code: Probable G-protein coupled receptor 33 (333 aa).

Topologically, residues 1 to 30 are extracellular; that stretch reads MDLINSTDYLINASTLVRNSTQFLAPASKM. Asparagine 5, asparagine 12, and asparagine 19 each carry an N-linked (GlcNAc...) asparagine glycan. A helical transmembrane segment spans residues 31-53; the sequence is IIALSLYISSIIGTITNGLYLWV. Over 54-64 the chain is Cytoplasmic; the sequence is LRFKMKQTVNT. The chain crosses the membrane as a helical span at residues 65–86; the sequence is LLFFHLILSYFISTMILPFMAT. Residues 87–103 are Extracellular-facing; that stretch reads SQLQDNHWNFGTALCKV. A disulfide bridge links cysteine 101 with cysteine 179. A helical transmembrane segment spans residues 104–124; that stretch reads FNGTLSLGMFTSVFFLSAIGL. Topologically, residues 125–143 are cytoplasmic; sequence DRYLLTLHPVWSQQHRTPR. The chain crosses the membrane as a helical span at residues 144-165; the sequence is WASSIVLGVWISAAALSIPYLI. Residues 166-209 are Extracellular-facing; the sequence is FRETHHDRKGKVTCQNNYAVSTNWESKEMQASRQWIHVACFISR. Residues 210-230 form a helical membrane-spanning segment; it reads FLLGFLLPFFIIIFCYERVAS. Residues 231-246 lie on the Cytoplasmic side of the membrane; it reads KVKERSLFKSSKPFKV. The chain crosses the membrane as a helical span at residues 247-268; it reads MMTAIISFFVCWMPYHIHQGLL. Topologically, residues 269 to 283 are extracellular; that stretch reads LTTNQSLLLELTLIL. Asparagine 272 is a glycosylation site (N-linked (GlcNAc...) asparagine). The chain crosses the membrane as a helical span at residues 284–303; the sequence is TVLTTSFNTIFSPTLYLFVG. Topologically, residues 304 to 333 are cytoplasmic; that stretch reads ENFKKVFKKSILALFESTFSEDSSVERTQT.

The protein belongs to the G-protein coupled receptor 1 family. Expressed in spleen, lung, heart, liver, kidney, pancreas, thymus, gonads and leukocytes.

It localises to the cell membrane. Its function is as follows. Orphan receptor; could be a chemoattractant receptor. The chain is Probable G-protein coupled receptor 33 (GPR33) from Homo sapiens (Human).